Consider the following 106-residue polypeptide: Halilectin 3, beta chain (106 aa).

Asparagine 65 carries N-linked (GlcNAc...) asparagine glycosylation.

In terms of assembly, probable heterotrimer consisting of an alpha chain and two beta chains. The alpha chain can probably have different glycosylation states. Glycosylated.

Lectin with affinity for N-acetyl-galactosamine, carragenan and glycoprotein porcine stomach mucin (PSM). Has metal-independent hemagglutinating activity towards erythrocytes from rabbit and human. Hemagglutinating activity is not inhibited by D-galactose, D-glucose, D-mannose, D-fucose, methyl-alpha-D-galactopyranoside, methyl-alpha-D-glucopyranoside, N-acetyl-glucosamine, N-acetyl-mannosamine, D-fructose, alpha-D-lactose, beta-D-lactose, D-lactulose, D-sucrose, fucoidan or glycoproteins thyroglobulin and ovalmucoid. This Haliclona caerulea (Blue Caribbean sponge) protein is Halilectin 3, beta chain.